The chain runs to 113 residues: Large ribosomal subunit protein bL19 (113 aa).

This sequence belongs to the bacterial ribosomal protein bL19 family.

This protein is located at the 30S-50S ribosomal subunit interface and may play a role in the structure and function of the aminoacyl-tRNA binding site. This Mycobacterium avium (strain 104) protein is Large ribosomal subunit protein bL19.